The following is a 300-amino-acid chain: Glutamyl-Q tRNA(Asp) synthetase (300 aa).

L-glutamate-binding positions include 14 to 18 (RFAPT) and Glu-50. A 'HIGH' region motif is present at residues 17 to 27 (PTPSGFLHFGS). 4 residues coordinate Zn(2+): Cys-106, Cys-108, Tyr-120, and Cys-124. L-glutamate-binding residues include Tyr-177 and Arg-195. Positions 233–237 (KLGKS) match the 'KMSKS' region motif. An ATP-binding site is contributed by Lys-236.

Belongs to the class-I aminoacyl-tRNA synthetase family. GluQ subfamily. It depends on Zn(2+) as a cofactor.

Catalyzes the tRNA-independent activation of glutamate in presence of ATP and the subsequent transfer of glutamate onto a tRNA(Asp). Glutamate is transferred on the 2-amino-5-(4,5-dihydroxy-2-cyclopenten-1-yl) moiety of the queuosine in the wobble position of the QUC anticodon. In Pseudomonas putida (strain ATCC 700007 / DSM 6899 / JCM 31910 / BCRC 17059 / LMG 24140 / F1), this protein is Glutamyl-Q tRNA(Asp) synthetase.